Consider the following 102-residue polypeptide: MKHEMMNIKPRCITIFFLLFALLLGNYVVQASRPRSIENTVSLLPQVHLLNSRRRHMIGSTAPTCTYNECRGCRYKCRAEQVPVEGNDPINSAYHYRCVCHR.

The signal sequence occupies residues 1-31; it reads MKHEMMNIKPRCITIFFLLFALLLGNYVVQA. Disulfide bonds link Cys-65-Cys-98, Cys-70-Cys-77, and Cys-73-Cys-100.

It belongs to the plant cysteine rich small secretory peptide family. Epidermal patterning factor subfamily. In terms of assembly, interacts with ERECTA and TMM. In terms of tissue distribution, expressed in immature organs, including leaves, stems and flower buds, but not in roots, shoot apical meristem and petals. Detected in the mesophyll tissues but not in the epidermal tissues where stomata develop.

The protein resides in the secreted. It localises to the extracellular space. The protein localises to the apoplast. Positively regulates stomatal density and patterning. Acts by competing with EPF2 (AC Q8LC53) for the same receptors, ERECTA (AC Q42371) and TMM (AC Q9SSD1). Not cleaved by the protease CRSP (AC Q9LNU1). This Arabidopsis thaliana (Mouse-ear cress) protein is EPIDERMAL PATTERNING FACTOR-like protein 9.